Here is a 479-residue protein sequence, read N- to C-terminus: Glutamate--tRNA ligase (479 aa).

The 'HIGH' region motif lies at 21 to 31 (PSPTGYLHVGG). A 'KMSKS' region motif is present at residues 248-252 (KLSKR). Lysine 251 contacts ATP.

The protein belongs to the class-I aminoacyl-tRNA synthetase family. Glutamate--tRNA ligase type 1 subfamily. Monomer.

It localises to the cytoplasm. The enzyme catalyses tRNA(Glu) + L-glutamate + ATP = L-glutamyl-tRNA(Glu) + AMP + diphosphate. Functionally, catalyzes the attachment of glutamate to tRNA(Glu) in a two-step reaction: glutamate is first activated by ATP to form Glu-AMP and then transferred to the acceptor end of tRNA(Glu). This chain is Glutamate--tRNA ligase, found in Actinobacillus pleuropneumoniae serotype 7 (strain AP76).